The chain runs to 529 residues: MDFTQVPPSYILGVLLSSTSILFCLKYLLRSGYRPPELPSGPTTVPLFGNELQVPKADAHFQFTKWAKQYGGMFSLKRYMNTTIVITDRKLMKSLLDKKSNIYSHRPASLVSHLITQSDHLLVMQYGEEWRMLRKIIHQYFMEPNCEREHWKVQEAEAKQMLHDFLTMPEDHMLHPKRYSNSITNSLVFGIRTATVHDEYMDELFYLMDKWSLVQELGATPPVDSFGLLRILPQWMLGNWKNRAVEVGDLMQALYSKVLDQVRARRQRGVYRDSFMDRVLDNLEKTPLTENQLRFLGGVLMEGGSDTSSSLILTIIQAMTKYPEVQAKAHAQIDAVVGSERSPSWSDFAQLPYINMIIKESHRWRPVSPLGVPHAVAEDDRVNNTLIPKGSTIVLNVWGMHHDPDRWSEPEHFQPDRFADYPALASTYAASGEWDKRDHYGYGAGRRICPGIHLAERNLFIGVAKLLWAFEFSEPLGSRSDISAESGASQGFLHCPKDYGCAIRLRAPEKRETIMREFEEAQGVFSRFD.

Topologically, residues methionine 1–proline 8 are cytoplasmic. The helical transmembrane segment at serine 9–leucine 25 threads the bilayer. At lysine 26 to aspartate 529 the chain is on the lumenal side. Asparagine 81 and asparagine 383 each carry an N-linked (GlcNAc...) asparagine glycan. Cysteine 449 is a heme binding site.

Belongs to the cytochrome P450 family. The cofactor is heme.

The protein resides in the endoplasmic reticulum membrane. The enzyme catalyses 3-hydroxybenzyl alcohol + reduced [NADPH--hemoprotein reductase] + O2 = gentisyl alcohol + oxidized [NADPH--hemoprotein reductase] + H2O + H(+). The protein operates within mycotoxin biosynthesis; patulin biosynthesis. Its function is as follows. Cytochrome P450 monooxygenase; part of the gene cluster that mediates the biosynthesis of patulin, an acetate-derived tetraketide mycotoxin produced by several fungal species that shows antimicrobial properties against several bacteria. PatI catalyzes the conversion of m-hydroxybenzyl alcohol into gentisyl alcohol. The pathway begins with the synthesis of 6-methylsalicylic acid by the polyketide synthase (PKS) patK via condensation of acetate and malonate units. The 6-methylsalicylic acid decarboxylase patG then catalyzes the decarboxylation of 6-methylsalicylic acid to yield m-cresol (also known as 3-methylphenol). These first reactions occur in the cytosol. The intermediate m-cresol is then transported into the endoplasmic reticulum where the cytochrome P450 monooxygenase patH converts it to m-hydroxybenzyl alcohol, which is further converted to gentisyl alcohol by the cytochrome P450 monooxygenase patI. The oxidoreductases patJ and patO further convert gentisyl alcohol to isoepoxydon in the vacuole. PatN catalyzes then the transformation of isoepoxydon into phyllostine. The cluster protein patF is responsible for the conversion from phyllostine to neopatulin whereas the alcohol dehydrogenase patD converts neopatulin to E-ascladiol. The steps between isoepoxydon and E-ascladiol occur in the cytosol, and E-ascladiol is probably secreted to the extracellular space by one of the cluster-specific transporters patC or patM. Finally, the secreted patulin synthase patE catalyzes the conversion of E-ascladiol to patulin. This is Cytochrome P450 monooxygenase patI from Aspergillus clavatus (strain ATCC 1007 / CBS 513.65 / DSM 816 / NCTC 3887 / NRRL 1 / QM 1276 / 107).